Reading from the N-terminus, the 91-residue chain is DNA-binding protein HU (91 aa).

This sequence belongs to the bacterial histone-like protein family.

Its function is as follows. Histone-like DNA-binding protein which is capable of wrapping DNA to stabilize it, and thus to prevent its denaturation under extreme environmental conditions. Also seems to act as a fortuitous virulence factor in delayed sequelae by binding to heparan sulfate-proteoglycans in the extracellular matrix of target organs and acting as a nidus for in situ immune complex formation. This is DNA-binding protein HU (hup) from Streptococcus downei (Streptococcus sobrinus).